Here is a 196-residue protein sequence, read N- to C-terminus: MARADKATAVADIAEQFKEATATLITEYRGLTVANLAELRRSLSGAATYSVAKNTLVKRAASEAGIEGLDELFAGPTAIAFVTGEPVDAAKAIKTFAKEHKALVIKGGYMDGRALSVAEVERIADLESREVLLAKLAGAMKGNLAKAAGLFNAPASQVARLAAALQEKKAAECPAEAPQPAAETPAEAPEAPADAE.

The tract at residues 169–196 (KAAECPAEAPQPAAETPAEAPEAPADAE) is disordered. Residues 172–196 (ECPAEAPQPAAETPAEAPEAPADAE) show a composition bias toward low complexity.

This sequence belongs to the universal ribosomal protein uL10 family. Part of the ribosomal stalk of the 50S ribosomal subunit. The N-terminus interacts with L11 and the large rRNA to form the base of the stalk. The C-terminus forms an elongated spine to which L12 dimers bind in a sequential fashion forming a multimeric L10(L12)X complex.

In terms of biological role, forms part of the ribosomal stalk, playing a central role in the interaction of the ribosome with GTP-bound translation factors. The polypeptide is Large ribosomal subunit protein uL10 (Mycobacterium avium (strain 104)).